The sequence spans 358 residues: Alanine racemase (358 aa).

Residue Lys-34 is the Proton acceptor; specific for D-alanine of the active site. N6-(pyridoxal phosphate)lysine is present on Lys-34. Residue Arg-129 participates in substrate binding. The active-site Proton acceptor; specific for L-alanine is Tyr-254. Met-302 lines the substrate pocket.

The protein belongs to the alanine racemase family. Pyridoxal 5'-phosphate is required as a cofactor.

The catalysed reaction is L-alanine = D-alanine. It functions in the pathway amino-acid biosynthesis; D-alanine biosynthesis; D-alanine from L-alanine: step 1/1. In terms of biological role, catalyzes the interconversion of L-alanine and D-alanine. May also act on other amino acids. This Vibrio atlanticus (strain LGP32) (Vibrio splendidus (strain Mel32)) protein is Alanine racemase (alr).